A 473-amino-acid polypeptide reads, in one-letter code: Trigger factor (473 aa).

The PPIase FKBP-type domain maps to 174 to 261; sequence GDIAVVSFKG…LKDLKEKELP (88 aa). The tract at residues 437–473 is disordered; sequence EISEKVTKSTTKSKTKSKTKKESQAKSEPNKKKKEKK. Over residues 456–466 the composition is skewed to basic and acidic residues; the sequence is KKESQAKSEPN.

This sequence belongs to the FKBP-type PPIase family. Tig subfamily.

Its subcellular location is the cytoplasm. It carries out the reaction [protein]-peptidylproline (omega=180) = [protein]-peptidylproline (omega=0). In terms of biological role, involved in protein export. Acts as a chaperone by maintaining the newly synthesized protein in an open conformation. Functions as a peptidyl-prolyl cis-trans isomerase. This Prochlorococcus marinus (strain MIT 9515) protein is Trigger factor.